The chain runs to 721 residues: Polyribonucleotide nucleotidyltransferase (721 aa).

Mg(2+) contacts are provided by Asp511 and Asp517. Residues 577–637 (PSTDFFHINP…SGVQAAREHI (61 aa)) enclose the KH domain. The 68-residue stretch at 654–721 (GDIHKGIVKK…KGNKISLGIA (68 aa)) folds into the S1 motif domain.

It belongs to the polyribonucleotide nucleotidyltransferase family. Mg(2+) is required as a cofactor.

The protein localises to the cytoplasm. The enzyme catalyses RNA(n+1) + phosphate = RNA(n) + a ribonucleoside 5'-diphosphate. In terms of biological role, involved in mRNA degradation. Catalyzes the phosphorolysis of single-stranded polyribonucleotides processively in the 3'- to 5'-direction. This chain is Polyribonucleotide nucleotidyltransferase, found in Sulfurimonas denitrificans (strain ATCC 33889 / DSM 1251) (Thiomicrospira denitrificans (strain ATCC 33889 / DSM 1251)).